The following is a 109-amino-acid chain: Cell division suppressor protein YneA (109 aa).

A LysM domain is found at 39–90 (SEVDVNEGDSIWALADQYAAKSDMAKADFVSWVEKENNLTDGHVKAGDYVVI).

The protein belongs to the YneA family.

Its subcellular location is the cytoplasm. Its function is as follows. Inhibits cell division during the SOS response. Affects a later stage of the cell division protein assembly, after the assembly of the Z ring, by probably suppressing recruitment of FtsL and/or DivIC to the division machinery. This chain is Cell division suppressor protein YneA, found in Listeria innocua serovar 6a (strain ATCC BAA-680 / CLIP 11262).